The following is a 186-amino-acid chain: Spermidine N(1)-acetyltransferase (186 aa).

The region spanning 7 to 167 (VKLRPLERED…NAIRMCIFQH (161 aa)) is the N-acetyltransferase domain. Spermine contacts are provided by residues Met30, Glu35, Glu43, and 51–54 (HIHD). Mg(2+) is bound at residue Glu35. Spermidine contacts are provided by Glu35 and Glu43. Glu76 provides a ligand contact to Mg(2+). Position 85–87 (85–87 (EFQ)) interacts with spermine. Acetyl-CoA-binding positions include 88–90 (III), 95–101 (QGKGLAT), and 128–137 (NEKAIHIYRK). Tyr135 serves as the catalytic Proton donor.

This sequence belongs to the acetyltransferase family. Homododecamer.

The protein localises to the cytoplasm. It carries out the reaction an alkane-alpha,omega-diamine + acetyl-CoA = an N-acetylalkane-alpha,omega-diamine + CoA + H(+). It catalyses the reaction spermidine + acetyl-CoA = N(1)-acetylspermidine + CoA + H(+). The enzyme catalyses spermidine + acetyl-CoA = N(8)-acetylspermidine + CoA + H(+). The catalysed reaction is spermine + acetyl-CoA = N(1)-acetylspermine + CoA + H(+). Its pathway is amine and polyamine degradation; spermidine degradation. The protein operates within amine and polyamine degradation; spermine degradation. Involved in the protection against polyamine toxicity by regulating their concentration. Catalyzes the transfer of an acetyl group from acetyl coenzyme A (AcCoA) to the primary amino groups of spermidine to yield N(1)- and N(8)-acetylspermidine. It can also use spermine. This Escherichia coli O157:H7 protein is Spermidine N(1)-acetyltransferase (speG).